A 506-amino-acid polypeptide reads, in one-letter code: Maturase K (506 aa).

The protein belongs to the intron maturase 2 family. MatK subfamily.

The protein localises to the plastid. It is found in the chloroplast. Functionally, usually encoded in the trnK tRNA gene intron. Probably assists in splicing its own and other chloroplast group II introns. The polypeptide is Maturase K (Rhododendron tomentosum (Marsh Labrador tea)).